The chain runs to 176 residues: Small ribosomal subunit protein uS4 (176 aa).

An S4 RNA-binding domain is found at 103 to 165 (RRLQTIVYKK…PTSPYAKRRL (63 aa)).

Belongs to the universal ribosomal protein uS4 family. Part of the 30S ribosomal subunit. Contacts protein S5. The interaction surface between S4 and S5 is involved in control of translational fidelity.

One of the primary rRNA binding proteins, it binds directly to 16S rRNA where it nucleates assembly of the body of the 30S subunit. Its function is as follows. With S5 and S12 plays an important role in translational accuracy. This Hyperthermus butylicus (strain DSM 5456 / JCM 9403 / PLM1-5) protein is Small ribosomal subunit protein uS4.